Reading from the N-terminus, the 174-residue chain is ATP synthase subunit delta (174 aa).

This sequence belongs to the ATPase delta chain family. F-type ATPases have 2 components, F(1) - the catalytic core - and F(0) - the membrane proton channel. F(1) has five subunits: alpha(3), beta(3), gamma(1), delta(1), epsilon(1). F(0) has three main subunits: a(1), b(2) and c(10-14). The alpha and beta chains form an alternating ring which encloses part of the gamma chain. F(1) is attached to F(0) by a central stalk formed by the gamma and epsilon chains, while a peripheral stalk is formed by the delta and b chains.

Its subcellular location is the cell inner membrane. Its function is as follows. F(1)F(0) ATP synthase produces ATP from ADP in the presence of a proton or sodium gradient. F-type ATPases consist of two structural domains, F(1) containing the extramembraneous catalytic core and F(0) containing the membrane proton channel, linked together by a central stalk and a peripheral stalk. During catalysis, ATP synthesis in the catalytic domain of F(1) is coupled via a rotary mechanism of the central stalk subunits to proton translocation. In terms of biological role, this protein is part of the stalk that links CF(0) to CF(1). It either transmits conformational changes from CF(0) to CF(1) or is implicated in proton conduction. In Helicobacter hepaticus (strain ATCC 51449 / 3B1), this protein is ATP synthase subunit delta.